The following is a 391-amino-acid chain: S-adenosylmethionine synthase (391 aa).

Position 19 (His-19) interacts with ATP. Mg(2+) is bound at residue Asp-21. Residue Glu-47 participates in K(+) binding. Residues Glu-60 and Gln-103 each contribute to the L-methionine site. Residues 103–113 (QSPDIAQGVDR) are flexible loop. Residues 168-170 (DGK), 236-237 (RF), Asp-245, 251-252 (RK), Ala-268, and Lys-272 contribute to the ATP site. Position 245 (Asp-245) interacts with L-methionine. An L-methionine-binding site is contributed by Lys-276.

The protein belongs to the AdoMet synthase family. As to quaternary structure, homotetramer; dimer of dimers. Mg(2+) is required as a cofactor. It depends on K(+) as a cofactor.

The protein localises to the cytoplasm. It catalyses the reaction L-methionine + ATP + H2O = S-adenosyl-L-methionine + phosphate + diphosphate. The protein operates within amino-acid biosynthesis; S-adenosyl-L-methionine biosynthesis; S-adenosyl-L-methionine from L-methionine: step 1/1. Catalyzes the formation of S-adenosylmethionine (AdoMet) from methionine and ATP. The overall synthetic reaction is composed of two sequential steps, AdoMet formation and the subsequent tripolyphosphate hydrolysis which occurs prior to release of AdoMet from the enzyme. The chain is S-adenosylmethionine synthase from Oleidesulfovibrio alaskensis (strain ATCC BAA-1058 / DSM 17464 / G20) (Desulfovibrio alaskensis).